The following is a 510-amino-acid chain: Beta-glucosidase 26 (510 aa).

A signal peptide spans 1–27; that stretch reads MRKFIAALRLALAAAAHLLLTLPPAQC. Glutamine 59 provides a ligand contact to a beta-D-glucoside. Asparagine 87 and asparagine 127 each carry an N-linked (GlcNAc...) asparagine glycan. A beta-D-glucoside is bound by residues histidine 160 and 205-206; that span reads NE. Glutamate 206 acts as the Proton donor in catalysis. A disulfide bridge connects residues cysteine 225 and cysteine 228. An N-linked (GlcNAc...) asparagine glycan is attached at asparagine 233. Residues tyrosine 345 and glutamate 416 each coordinate a beta-D-glucoside. The Nucleophile role is filled by glutamate 416. Asparagine 424 is a glycosylation site (N-linked (GlcNAc...) asparagine). A beta-D-glucoside-binding positions include tryptophan 463, 470-471, and phenylalanine 479; that span reads EW.

It belongs to the glycosyl hydrolase 1 family.

It carries out the reaction Hydrolysis of terminal, non-reducing beta-D-glucosyl residues with release of beta-D-glucose.. Functionally, hydrolyzes p-nitrophenyl beta-D-glucoside, p-nitrophenyl beta-D-mannoside, p-nitrophenyl beta-D-galactoside, p-nitrophenyl beta-D-xyloside, p-nitrophenyl beta-D-fucoside, p-nitrophenyl beta-L-arabinoside, cello-oligosaccharides, laminari-oligosaccharides and sophorose. The chain is Beta-glucosidase 26 (BGLU26) from Oryza sativa subsp. japonica (Rice).